We begin with the raw amino-acid sequence, 595 residues long: UvrABC system protein C (595 aa).

Positions 17–94 (FEPGCYLMKD…IKQYQPRYNI (78 aa)) constitute a GIY-YIG domain. The UVR domain maps to 199–234 (KTIIKNLESRMQAASENLEFEQAKEYRDLIQNIHNL).

It belongs to the UvrC family. Interacts with UvrB in an incision complex.

The protein resides in the cytoplasm. In terms of biological role, the UvrABC repair system catalyzes the recognition and processing of DNA lesions. UvrC both incises the 5' and 3' sides of the lesion. The N-terminal half is responsible for the 3' incision and the C-terminal half is responsible for the 5' incision. The chain is UvrABC system protein C from Staphylococcus carnosus (strain TM300).